A 218-amino-acid chain; its full sequence is ETS domain-containing protein ets-7 (218 aa).

A DNA-binding region (ETS) is located at residues 12-93 (QRLLNFLRGL…KGKDSRYCFL (82 aa)). Residues 131–161 (TSNFSLQSSPSSSSNSSSARTMSATSSPTSS) show a composition bias toward low complexity. Residues 131-162 (TSNFSLQSSPSSSSNSSSARTMSATSSPTSSL) are disordered.

The protein belongs to the ETS family.

The protein localises to the nucleus. Probable transcription factor. Involved in responses to oxidative stress. The polypeptide is ETS domain-containing protein ets-7 (Caenorhabditis elegans).